Consider the following 99-residue polypeptide: Large ribosomal subunit protein uL23 (99 aa).

The protein belongs to the universal ribosomal protein uL23 family. Part of the 50S ribosomal subunit. Contacts protein L29, and trigger factor when it is bound to the ribosome.

Functionally, one of the early assembly proteins it binds 23S rRNA. One of the proteins that surrounds the polypeptide exit tunnel on the outside of the ribosome. Forms the main docking site for trigger factor binding to the ribosome. The polypeptide is Large ribosomal subunit protein uL23 (Leifsonia xyli subsp. xyli (strain CTCB07)).